A 451-amino-acid chain; its full sequence is Signal transduction histidine-protein kinase ArlS (451 aa).

2 helical membrane passes run 11–31 and 156–176; these read IIVT…IIIF and IIAL…SYVF. The HAMP domain maps to 178-231; it reads TQITKPLVSLSNKMIEIRRDGFQNKLQLNTNYEEIDNLANTFNEMMSQIEESFN. A Histidine kinase domain is found at 239 to 451; sequence DASHELRTPL…NKGTTFKIIF (213 aa). His242 is subject to Phosphohistidine; by autocatalysis.

Post-translationally, autophosphorylated.

The protein resides in the cell membrane. The catalysed reaction is ATP + protein L-histidine = ADP + protein N-phospho-L-histidine.. Its function is as follows. Member of the two-component regulatory system ArlS/ArlR involved in the regulation of adhesion, autolysis, multidrug resistance and virulence. ArlS probably functions as a sensor protein kinase which is autophosphorylated at a histidine residue and transfers its phosphate group to ArlR. In Staphylococcus aureus (strain USA300), this protein is Signal transduction histidine-protein kinase ArlS (arlS).